Reading from the N-terminus, the 667-residue chain is DNA ligase (667 aa).

NAD(+) contacts are provided by residues 34-38 (DYEFD), 83-84 (SL), and Glu-117. Lys-119 serves as the catalytic N6-AMP-lysine intermediate. Residues Arg-140, Glu-176, Lys-289, and Lys-313 each coordinate NAD(+). Positions 407, 410, 425, and 431 each coordinate Zn(2+). The BRCT domain maps to 591 to 667 (QVNRNFEGMS…ISEDEFMGMM (77 aa)).

Belongs to the NAD-dependent DNA ligase family. LigA subfamily. It depends on Mg(2+) as a cofactor. Requires Mn(2+) as cofactor.

The enzyme catalyses NAD(+) + (deoxyribonucleotide)n-3'-hydroxyl + 5'-phospho-(deoxyribonucleotide)m = (deoxyribonucleotide)n+m + AMP + beta-nicotinamide D-nucleotide.. In terms of biological role, DNA ligase that catalyzes the formation of phosphodiester linkages between 5'-phosphoryl and 3'-hydroxyl groups in double-stranded DNA using NAD as a coenzyme and as the energy source for the reaction. It is essential for DNA replication and repair of damaged DNA. In Chlorobium chlorochromatii (strain CaD3), this protein is DNA ligase.